A 416-amino-acid chain; its full sequence is Phosphoglycerate kinase (416 aa).

The (2R)-3-phosphoglycerate site is built by Val23, Asp24, Phe25, Asn26, Gln39, Arg40, Ser63, His64, Gly66, Arg67, Leu122, Arg123, His170, and Arg171. Residue Gly214 participates in ADP binding. Residue Gly214 coordinates CDP. AMP is bound by residues Ala215 and Lys216. Ala215 lines the ATP pocket. Ala215 contacts Mg(2+). Asp219 contacts CDP. Mg(2+) is bound at residue Asp219. Lys220 serves as a coordination point for AMP. Lys220 is an ATP binding site. Gly238 serves as a coordination point for ADP. Gly238 is a binding site for CDP. AMP is bound by residues Gly239 and Gly312. Residues Gly239 and Gly312 each contribute to the ATP site. Residues Gly337, Ala339, and Phe342 each coordinate CDP. Residue Phe342 participates in ADP binding. Glu343 is a binding site for AMP. ATP-binding residues include Glu343, Asp374, and Thr375. Asp374 contributes to the Mg(2+) binding site.

Belongs to the phosphoglycerate kinase family. As to quaternary structure, monomer. Requires Mg(2+) as cofactor.

Its subcellular location is the cytoplasm. The protein localises to the mitochondrion. It catalyses the reaction (2R)-3-phosphoglycerate + ATP = (2R)-3-phospho-glyceroyl phosphate + ADP. It participates in carbohydrate degradation; glycolysis; pyruvate from D-glyceraldehyde 3-phosphate: step 2/5. Catalyzes one of the two ATP producing reactions in the glycolytic pathway via the reversible conversion of 1,3-diphosphoglycerate to 3-phosphoglycerate. Both L- and D- forms of purine and pyrimidine nucleotides can be used as substrates, but the activity is much lower on pyrimidines. Negatively regulates the biosynthesis of acetyl-CoA from pyruvate in the mitochondrion. The sequence is that of Phosphoglycerate kinase (pgk1) from Hypocrea jecorina (Trichoderma reesei).